A 114-amino-acid chain; its full sequence is T cell receptor beta variable 6-2 (114 aa).

The signal sequence occupies residues 1–21 (MSLGLLCCGAFSLLWAGPVNA). One can recognise an Ig-like domain in the interval 22 to 114 (GVTQTPKFRV…TSVYFCASSY (93 aa)). A disulfide bridge connects residues Cys42 and Cys110. Residue Asn84 is glycosylated (N-linked (GlcNAc...) asparagine).

Alpha-beta TR is a heterodimer composed of an alpha and beta chain; disulfide-linked. The alpha-beta TR is associated with the transmembrane signaling CD3 coreceptor proteins to form the TR-CD3 (TcR or TCR). The assembly of alpha-beta TR heterodimers with CD3 occurs in the endoplasmic reticulum where a single alpha-beta TR heterodimer associates with one CD3D-CD3E heterodimer, one CD3G-CD3E heterodimer and one CD247 homodimer forming a stable octameric structure. CD3D-CD3E and CD3G-CD3E heterodimers preferentially associate with TR alpha and TR beta chains, respectively. The association of the CD247 homodimer is the last step of TcR assembly in the endoplasmic reticulum and is required for transport to the cell surface.

It localises to the cell membrane. Functionally, v region of the variable domain of T cell receptor (TR) beta chain that participates in the antigen recognition. Alpha-beta T cell receptors are antigen specific receptors which are essential to the immune response and are present on the cell surface of T lymphocytes. Recognize peptide-major histocompatibility (MH) (pMH) complexes that are displayed by antigen presenting cells (APC), a prerequisite for efficient T cell adaptive immunity against pathogens. Binding of alpha-beta TR to pMH complex initiates TR-CD3 clustering on the cell surface and intracellular activation of LCK that phosphorylates the ITAM motifs of CD3G, CD3D, CD3E and CD247 enabling the recruitment of ZAP70. In turn ZAP70 phosphorylates LAT, which recruits numerous signaling molecules to form the LAT signalosome. The LAT signalosome propagates signal branching to three major signaling pathways, the calcium, the mitogen-activated protein kinase (MAPK) kinase and the nuclear factor NF-kappa-B (NF-kB) pathways, leading to the mobilization of transcription factors that are critical for gene expression and essential for T cell growth and differentiation. The T cell repertoire is generated in the thymus, by V-(D)-J rearrangement. This repertoire is then shaped by intrathymic selection events to generate a peripheral T cell pool of self-MH restricted, non-autoaggressive T cells. Post-thymic interaction of alpha-beta TR with the pMH complexes shapes TR structural and functional avidity. The sequence is that of T cell receptor beta variable 6-2 from Homo sapiens (Human).